A 541-amino-acid chain; its full sequence is Chaperonin GroEL 2 (541 aa).

ATP contacts are provided by residues 29–32 (TLGP), 86–90 (DGTTT), Gly413, 476–478 (NAA), and Asp492.

Belongs to the chaperonin (HSP60) family. In terms of assembly, forms a cylinder of 14 subunits composed of two heptameric rings stacked back-to-back. Interacts with the co-chaperonin GroES.

The protein localises to the secreted. The protein resides in the capsule. Its subcellular location is the cell surface. It localises to the cell wall. The enzyme catalyses ATP + H2O + a folded polypeptide = ADP + phosphate + an unfolded polypeptide.. Together with its co-chaperonin GroES, plays an essential role in assisting protein folding. The GroEL-GroES system forms a nano-cage that allows encapsulation of the non-native substrate proteins and provides a physical environment optimized to promote and accelerate protein folding. In Mycolicibacterium gilvum (strain PYR-GCK) (Mycobacterium gilvum (strain PYR-GCK)), this protein is Chaperonin GroEL 2.